The following is a 205-amino-acid chain: Urease accessory protein UreG (205 aa).

Position 14–21 (14–21 (GPVGSGKT)) interacts with GTP.

In terms of assembly, homodimer. UreD, UreF and UreG form a complex that acts as a GTP-hydrolysis-dependent molecular chaperone, activating the urease apoprotein by helping to assemble the nickel containing metallocenter of UreC. The UreE protein probably delivers the nickel.

The protein resides in the cytoplasm. Its activity is regulated as follows. Activation of apourease within the UreDFG-apoprotein complex is inhibited by zinc, copper and cobalt. Functionally, facilitates the functional incorporation of the urease nickel metallocenter. This process requires GTP hydrolysis, probably effectuated by UreG. The polypeptide is Urease accessory protein UreG (Klebsiella aerogenes (Enterobacter aerogenes)).